The sequence spans 224 residues: Ribose-5-phosphate isomerase A (224 aa).

Residues 26-29 (TGST), 82-85 (DGAD), and 95-98 (KGGG) each bind substrate. Residue Glu104 is the Proton acceptor of the active site. Lys122 contacts substrate.

This sequence belongs to the ribose 5-phosphate isomerase family. As to quaternary structure, homodimer.

The enzyme catalyses aldehydo-D-ribose 5-phosphate = D-ribulose 5-phosphate. It participates in carbohydrate degradation; pentose phosphate pathway; D-ribose 5-phosphate from D-ribulose 5-phosphate (non-oxidative stage): step 1/1. Functionally, catalyzes the reversible conversion of ribose-5-phosphate to ribulose 5-phosphate. In Streptococcus suis (strain 98HAH33), this protein is Ribose-5-phosphate isomerase A.